Here is a 182-residue protein sequence, read N- to C-terminus: Small ribosomal subunit protein uS4c (182 aa).

The 62-residue stretch at 82–143 (MRLDNILFRL…KQRSKALIQN (62 aa)) folds into the S4 RNA-binding domain.

The protein belongs to the universal ribosomal protein uS4 family. Part of the 30S ribosomal subunit. Contacts protein S5. The interaction surface between S4 and S5 is involved in control of translational fidelity.

The protein localises to the plastid. The protein resides in the chloroplast. Its function is as follows. One of the primary rRNA binding proteins, it binds directly to 16S rRNA where it nucleates assembly of the body of the 30S subunit. In terms of biological role, with S5 and S12 plays an important role in translational accuracy. This is Small ribosomal subunit protein uS4c (rps4) from Iris domestica (Leopard lily).